Reading from the N-terminus, the 318-residue chain is Small ribosomal subunit protein RACK1 (318 aa).

WD repeat units follow at residues 11–44 (GHRGWVTSLACPQTPETATKVVSTSRDKTLLSWG), 65–95 (GHSAFVSDVALSNNGNFAVSASWDHSLRLWN), 107–137 (GHTKDVLSVAFSPDNRQIVSGGRDNALRVWN), 150–182 (AHTDWVSCVRFSPSLDAPVIVSGGWDNLVKVWD), 194–224 (GHTNYVTSVTVSPDGSLCASSDKDGVARLWD), 235–264 (AAGAPINQICFSPNRYWMCAATEKGIRIFD), and 282–315 (KKIVPECVSIAWSADGSTLYSGYTDNVIRVWGVS).

Belongs to the WD repeat G protein beta family. Ribosomal protein RACK1 subfamily.

The protein is Small ribosomal subunit protein RACK1 of Trypanosoma brucei brucei.